The sequence spans 438 residues: Protein SPMIP7 (438 aa).

As to expression, testis-specific.

Its function is as follows. Essential for normal spermatogenesis. The protein is Protein SPMIP7 of Homo sapiens (Human).